A 69-amino-acid polypeptide reads, in one-letter code: DNA gyrase inhibitor YacG (69 aa).

4 residues coordinate Zn(2+): cysteine 12, cysteine 15, cysteine 31, and cysteine 35. The interval 49–69 (RVPVEPKPDEGETPDQAERPQ) is disordered.

It belongs to the DNA gyrase inhibitor YacG family. In terms of assembly, interacts with GyrB. The cofactor is Zn(2+).

Inhibits all the catalytic activities of DNA gyrase by preventing its interaction with DNA. Acts by binding directly to the C-terminal domain of GyrB, which probably disrupts DNA binding by the gyrase. This is DNA gyrase inhibitor YacG from Thiobacillus denitrificans (strain ATCC 25259 / T1).